Consider the following 204-residue polypeptide: Peptidyl-prolyl cis-trans isomerase CYP20-1 (204 aa).

Residues 1–23 (MASSVTLLLWSLLLLGTLSAIQA) form the signal peptide. The 164-residue stretch at 38 to 201 (YFDVEIDGKA…SKVVIVDSGE (164 aa)) folds into the PPIase cyclophilin-type domain.

This sequence belongs to the cyclophilin-type PPIase family. Interacts with the PP2A A subunit PP2AA1/RCN1. As to expression, ubiquitous, mostly in aerial organs. Higher levels in leaf and buds, and lower levels in seedlings.

It localises to the endoplasmic reticulum. It is found in the secreted. The enzyme catalyses [protein]-peptidylproline (omega=180) = [protein]-peptidylproline (omega=0). With respect to regulation, binds cyclosporin A (CsA). CsA mediates some of its effects via an inhibitory action on PPIase. Functionally, PPIases accelerate the folding of proteins. It catalyzes the cis-trans isomerization of proline imidic peptide bonds in oligopeptides. Seems to be involved in root development. This chain is Peptidyl-prolyl cis-trans isomerase CYP20-1 (CYP20-1), found in Arabidopsis thaliana (Mouse-ear cress).